The primary structure comprises 286 residues: 1D-myo-inositol 2-acetamido-2-deoxy-alpha-D-glucopyranoside deacetylase (286 aa).

Zn(2+)-binding residues include histidine 12, aspartate 15, and histidine 147.

The protein belongs to the MshB deacetylase family. Requires Zn(2+) as cofactor.

The catalysed reaction is 1D-myo-inositol 2-acetamido-2-deoxy-alpha-D-glucopyranoside + H2O = 1D-myo-inositol 2-amino-2-deoxy-alpha-D-glucopyranoside + acetate. Functionally, catalyzes the deacetylation of 1D-myo-inositol 2-acetamido-2-deoxy-alpha-D-glucopyranoside (GlcNAc-Ins) in the mycothiol biosynthesis pathway. This chain is 1D-myo-inositol 2-acetamido-2-deoxy-alpha-D-glucopyranoside deacetylase, found in Thermobifida fusca (strain YX).